A 177-amino-acid chain; its full sequence is MTKEYATLAGGCFWCMVKPFTSYPGIKSVVSGYSGGHADNPTYEQVCTNQTGHVEAVQITFDPEVTSFENILDIYFKTFDPTDDQGQFFDRGESYQPVIFYHDKHQKKAAEFKKQQLNEQGIFKKPVITPIKPYKNFYPAEDYHQDYYKKNPVHYYQYQRGSGRKAFIESHWGNQNA.

Residue C12 is part of the active site.

Belongs to the MsrA Met sulfoxide reductase family.

It catalyses the reaction L-methionyl-[protein] + [thioredoxin]-disulfide + H2O = L-methionyl-(S)-S-oxide-[protein] + [thioredoxin]-dithiol. The enzyme catalyses [thioredoxin]-disulfide + L-methionine + H2O = L-methionine (S)-S-oxide + [thioredoxin]-dithiol. Has an important function as a repair enzyme for proteins that have been inactivated by oxidation. Catalyzes the reversible oxidation-reduction of methionine sulfoxide in proteins to methionine. The chain is Peptide methionine sulfoxide reductase MsrA 2 from Staphylococcus aureus (strain MRSA252).